Here is a 129-residue protein sequence, read N- to C-terminus: Small ribosomal subunit protein uS11 (129 aa).

The protein belongs to the universal ribosomal protein uS11 family. As to quaternary structure, part of the 30S ribosomal subunit. Interacts with proteins S7 and S18. Binds to IF-3.

Its function is as follows. Located on the platform of the 30S subunit, it bridges several disparate RNA helices of the 16S rRNA. Forms part of the Shine-Dalgarno cleft in the 70S ribosome. This is Small ribosomal subunit protein uS11 from Brucella abortus (strain S19).